The sequence spans 187 residues: Probable GTP-binding protein EngB (187 aa).

Residues 18 to 187 (KNSEIAFWGR…KLKENINSNF (170 aa)) enclose the EngB-type G domain. GTP is bound by residues 26-33 (GRSNVGKS), 52-56 (GRTQL), 70-73 (DLPG), 137-140 (TKID), and 168-170 (VSS). Positions 33 and 54 each coordinate Mg(2+).

This sequence belongs to the TRAFAC class TrmE-Era-EngA-EngB-Septin-like GTPase superfamily. EngB GTPase family. Mg(2+) serves as cofactor.

Functionally, necessary for normal cell division and for the maintenance of normal septation. This Mycoplasmopsis synoviae (strain 53) (Mycoplasma synoviae) protein is Probable GTP-binding protein EngB.